The primary structure comprises 644 residues: Chaperone protein DnaK (644 aa).

Residue T199 is modified to Phosphothreonine; by autocatalysis. The tract at residues 603-644 (YAKKSSEGQAAQGQTQSQESTKPAEEGVVDAEFEEVKEEDKK) is disordered. The segment covering 609 to 623 (EGQAAQGQTQSQEST) has biased composition (polar residues). The segment covering 629-644 (GVVDAEFEEVKEEDKK) has biased composition (acidic residues).

Belongs to the heat shock protein 70 family.

In terms of biological role, acts as a chaperone. This Legionella pneumophila (strain Corby) protein is Chaperone protein DnaK.